The chain runs to 904 residues: Protein translocase subunit SecA (904 aa).

ATP-binding positions include Gln-87, 105–109 (GEGKT), and Asp-507. The tract at residues 865-887 (GEGAEAAGQQPADAGPKIGRNDP) is disordered. Residues 868-880 (AEAAGQQPADAGP) are compositionally biased toward low complexity. Residues Cys-888, Cys-890, Cys-899, and His-900 each coordinate Zn(2+).

Belongs to the SecA family. Monomer and homodimer. Part of the essential Sec protein translocation apparatus which comprises SecA, SecYEG and auxiliary proteins SecDF-YajC and YidC. Zn(2+) serves as cofactor.

It localises to the cell inner membrane. Its subcellular location is the cytoplasm. The catalysed reaction is ATP + H2O + cellular proteinSide 1 = ADP + phosphate + cellular proteinSide 2.. Functionally, part of the Sec protein translocase complex. Interacts with the SecYEG preprotein conducting channel. Has a central role in coupling the hydrolysis of ATP to the transfer of proteins into and across the cell membrane, serving both as a receptor for the preprotein-SecB complex and as an ATP-driven molecular motor driving the stepwise translocation of polypeptide chains across the membrane. This is Protein translocase subunit SecA from Dechloromonas aromatica (strain RCB).